A 265-amino-acid chain; its full sequence is MLIPRLDEVRRALTAFHFFNTLLALAFPVIRSTSLCDYVFAVEGNEQCEIDSREREILMFLLIILAWKGRKATNWMHYVNNIFLFSKIAGMFLFIRADILPGIIYILACLIVTVLFPEPVYNGPEQVTYFQGEQLFEELTRNRNTIWVIQFFTTWSPECRHTSPVFAELSQKFTLPNMKFGKLDIGRWAKEGERFRVNAHPMSRQLPTICVFKDAKEIARRPLVNDSRRAVPFVFSEENCVLAFDLLNLYNEQKEKKGAKAKKED.

Positions 1-32 (MLIPRLDEVRRALTAFHFFNTLLALAFPVIRS) are cleaved as a signal peptide. Topologically, residues 33 to 96 (TSLCDYVFAV…KIAGMFLFIR (64 aa)) are extracellular. A helical transmembrane segment spans residues 97–117 (ADILPGIIYILACLIVTVLFP). At 118–265 (EPVYNGPEQV…KKGAKAKKED (148 aa)) the chain is on the cytoplasmic side. The Thioredoxin domain occupies 126-230 (QVTYFQGEQL…RPLVNDSRRA (105 aa)). Positions 262 to 265 (KKED) match the Di-lysine motif motif.

It is found in the membrane. In Caenorhabditis elegans, this protein is Thioredoxin-related transmembrane protein 2 homolog.